A 220-amino-acid chain; its full sequence is Flavin-dependent thymidylate synthase (220 aa).

A ThyX domain is found at 1–208 (MKIDILDKGF…PWTFEAFLKY (208 aa)). Residues T55, 78–80 (RHR), and E86 contribute to the FAD site. DUMP is bound by residues 75–78 (QWFR), 86–90 (ELSGR), and R147. Residues 78–88 (RHRIASYNELS) carry the ThyX motif motif. FAD-binding positions include 163–165 (NAR) and N169. Residue R174 coordinates dUMP. The active-site Involved in ionization of N3 of dUMP, leading to its activation is R174.

Belongs to the thymidylate synthase ThyX family. As to quaternary structure, homotetramer. It depends on FAD as a cofactor.

The enzyme catalyses dUMP + (6R)-5,10-methylene-5,6,7,8-tetrahydrofolate + NADPH + H(+) = dTMP + (6S)-5,6,7,8-tetrahydrofolate + NADP(+). Its pathway is pyrimidine metabolism; dTTP biosynthesis. Catalyzes the reductive methylation of 2'-deoxyuridine-5'-monophosphate (dUMP) to 2'-deoxythymidine-5'-monophosphate (dTMP) while utilizing 5,10-methylenetetrahydrofolate (mTHF) as the methyl donor, and NADPH and FADH(2) as the reductant. This is Flavin-dependent thymidylate synthase from Thermotoga petrophila (strain ATCC BAA-488 / DSM 13995 / JCM 10881 / RKU-1).